Consider the following 148-residue polypeptide: Natriuretic peptide BF131 (148 aa).

The signal sequence occupies residues 1 to 27; sequence MVGPSRLAGGGLLLLLLLALLPLALDG. The propeptide occupies 28 to 83; that stretch reads KPAPPPQALPKDPAAASAAERIMRALLPDSKSSRPATDRMVHPEHQAGGGDTRRLQ. 2 disordered regions span residues 54-83 and 105-127; these read LPDSKSSRPATDRMVHPEHQAGGGDTRRLQ and TSDMGCRHRKDPPRAPPAAPSAA. Basic and acidic residues predominate over residues 63–83; the sequence is ATDRMVHPEHQAGGGDTRRLQ. C94 and C110 are disulfide-bonded. A propeptide spanning residues 130–148 is cleaved from the precursor; that stretch reads AVTWLIRDLRADSKQSRAA.

The protein belongs to the natriuretic peptide family. As to expression, expressed by the venom gland.

The protein localises to the secreted. Functionally, natriuretic peptide that dose-dependently induces the rapid relaxation of rat aortic strips phenylephrine-precontracted. Acts by stimulating cGMP production in a dose-dependent manner (by probably activating NPR1 and/or NPR2). May also show potent hypotensive effects. In Bungarus flaviceps flaviceps (Red-headed krait), this protein is Natriuretic peptide BF131.